Reading from the N-terminus, the 217-residue chain is Probable nicotinate-nucleotide adenylyltransferase (217 aa).

It belongs to the NadD family.

The enzyme catalyses nicotinate beta-D-ribonucleotide + ATP + H(+) = deamido-NAD(+) + diphosphate. It functions in the pathway cofactor biosynthesis; NAD(+) biosynthesis; deamido-NAD(+) from nicotinate D-ribonucleotide: step 1/1. In terms of biological role, catalyzes the reversible adenylation of nicotinate mononucleotide (NaMN) to nicotinic acid adenine dinucleotide (NaAD). This chain is Probable nicotinate-nucleotide adenylyltransferase, found in Dechloromonas aromatica (strain RCB).